Reading from the N-terminus, the 293-residue chain is Autophagy-related protein 36 (293 aa).

2 stretches are compositionally biased toward polar residues: residues 98–108 and 260–273; these read ISSDSNKNSPP and GETL…ASSS. Disordered regions lie at residues 98 to 121 and 250 to 273; these read ISSD…NIRS and SRSR…ASSS.

As to quaternary structure, interacts with PEX3, ATG8 and ATG11.

The protein resides in the peroxisome. Its function is as follows. Required for autophagic breakdown of peroxisomes, called pexophagy, through linking peroxisomes to the autophagy apparatus. Involved in regulation of the glyoxylate cycle. The sequence is that of Autophagy-related protein 36 (ATG36) from Saccharomyces cerevisiae (strain ATCC 204508 / S288c) (Baker's yeast).